A 638-amino-acid polypeptide reads, in one-letter code: 1-deoxy-D-xylulose-5-phosphate synthase (638 aa).

Residues His-79 and 120-122 (GHS) contribute to the thiamine diphosphate site. Asp-151 contributes to the Mg(2+) binding site. Residues 152–153 (GA), Asn-182, Tyr-291, and Glu-373 each bind thiamine diphosphate. Asn-182 provides a ligand contact to Mg(2+).

Belongs to the transketolase family. DXPS subfamily. As to quaternary structure, homodimer. The cofactor is Mg(2+). It depends on thiamine diphosphate as a cofactor.

The catalysed reaction is D-glyceraldehyde 3-phosphate + pyruvate + H(+) = 1-deoxy-D-xylulose 5-phosphate + CO2. Its pathway is metabolic intermediate biosynthesis; 1-deoxy-D-xylulose 5-phosphate biosynthesis; 1-deoxy-D-xylulose 5-phosphate from D-glyceraldehyde 3-phosphate and pyruvate: step 1/1. In terms of biological role, catalyzes the acyloin condensation reaction between C atoms 2 and 3 of pyruvate and glyceraldehyde 3-phosphate to yield 1-deoxy-D-xylulose-5-phosphate (DXP). The sequence is that of 1-deoxy-D-xylulose-5-phosphate synthase from Xanthomonas euvesicatoria pv. vesicatoria (strain 85-10) (Xanthomonas campestris pv. vesicatoria).